We begin with the raw amino-acid sequence, 334 residues long: Mevalonate kinase (334 aa).

Residue 110-120 (PVGAGLGSSAA) participates in ATP binding. The active-site Proton acceptor is the Asp-161.

It belongs to the GHMP kinase family. Mevalonate kinase subfamily. In terms of assembly, homodimer. The cofactor is Mg(2+).

It is found in the cytoplasm. It carries out the reaction (R)-mevalonate + ATP = (R)-5-phosphomevalonate + ADP + H(+). It participates in isoprenoid biosynthesis; isopentenyl diphosphate biosynthesis via mevalonate pathway; isopentenyl diphosphate from (R)-mevalonate: step 1/3. Its function is as follows. Catalyzes the phosphorylation of (R)-mevalonate (MVA) to (R)-mevalonate 5-phosphate (MVAP). Functions in the mevalonate (MVA) pathway leading to isopentenyl diphosphate (IPP), a key precursor for the biosynthesis of isoprenoid compounds such as archaeal membrane lipids. This Thermococcus gammatolerans (strain DSM 15229 / JCM 11827 / EJ3) protein is Mevalonate kinase.